The chain runs to 206 residues: 3-demethoxyubiquinol 3-hydroxylase (206 aa).

Fe cation contacts are provided by Glu-55, Glu-85, His-88, Glu-137, Glu-169, and His-172.

Belongs to the COQ7 family. Fe cation serves as cofactor.

The protein resides in the cell membrane. The enzyme catalyses a 5-methoxy-2-methyl-3-(all-trans-polyprenyl)benzene-1,4-diol + AH2 + O2 = a 3-demethylubiquinol + A + H2O. Its pathway is cofactor biosynthesis; ubiquinone biosynthesis. Its function is as follows. Catalyzes the hydroxylation of 2-nonaprenyl-3-methyl-6-methoxy-1,4-benzoquinol during ubiquinone biosynthesis. The protein is 3-demethoxyubiquinol 3-hydroxylase of Laribacter hongkongensis (strain HLHK9).